The chain runs to 441 residues: Histidine--tRNA ligase (441 aa).

Belongs to the class-II aminoacyl-tRNA synthetase family. Homodimer.

It localises to the cytoplasm. The catalysed reaction is tRNA(His) + L-histidine + ATP = L-histidyl-tRNA(His) + AMP + diphosphate + H(+). The chain is Histidine--tRNA ligase from Synechococcus sp. (strain WH7803).